A 606-amino-acid chain; its full sequence is Vitamin B12 transporter BtuB (606 aa).

Residues 1 to 22 (MQKSLLAIAMASLLTPVSYLHA) form the signal peptide. Residues 29 to 36 (DTVVVTAN) carry the TonB box motif. The region spanning 41–153 (PLAEVIASTT…IAGVINVITT (113 aa)) is the TBDR plug domain. The TBDR beta-barrel domain maps to 158–606 (SEGSVVSLGA…RYFANLTYQF (449 aa)). The short motif at 589–606 (LSYNAPERRYFANLTYQF) is the TonB C-terminal box element.

It belongs to the TonB-dependent receptor family. BtuB (TC 1.B.14.3.1) subfamily.

It is found in the cell outer membrane. Functionally, involved in the active translocation of vitamin B12 (cyanocobalamin) across the outer membrane to the periplasmic space. It derives its energy for transport by interacting with the trans-periplasmic membrane protein TonB. This chain is Vitamin B12 transporter BtuB, found in Vibrio vulnificus (strain CMCP6).